Reading from the N-terminus, the 102-residue chain is Large ribosomal subunit protein bL21 (102 aa).

It belongs to the bacterial ribosomal protein bL21 family. Part of the 50S ribosomal subunit. Contacts protein L20.

Its function is as follows. This protein binds to 23S rRNA in the presence of protein L20. This Clavibacter sepedonicus (Clavibacter michiganensis subsp. sepedonicus) protein is Large ribosomal subunit protein bL21.